A 220-amino-acid chain; its full sequence is Protein-L-isoaspartate O-methyltransferase (220 aa).

The active site involves serine 70.

The protein belongs to the methyltransferase superfamily. L-isoaspartyl/D-aspartyl protein methyltransferase family.

It localises to the cytoplasm. The catalysed reaction is [protein]-L-isoaspartate + S-adenosyl-L-methionine = [protein]-L-isoaspartate alpha-methyl ester + S-adenosyl-L-homocysteine. In terms of biological role, catalyzes the methyl esterification of L-isoaspartyl residues in peptides and proteins that result from spontaneous decomposition of normal L-aspartyl and L-asparaginyl residues. It plays a role in the repair and/or degradation of damaged proteins. The sequence is that of Protein-L-isoaspartate O-methyltransferase from Halorhodospira halophila (strain DSM 244 / SL1) (Ectothiorhodospira halophila (strain DSM 244 / SL1)).